A 41-amino-acid polypeptide reads, in one-letter code: Photosystem I reaction center subunit IX (41 aa).

The helical transmembrane segment at 7 to 27 (YLSTAPVLTLVSLTAVAGLLI) threads the bilayer.

The protein belongs to the PsaJ family.

The protein localises to the plastid. Its subcellular location is the chloroplast thylakoid membrane. Functionally, may help in the organization of the PsaE and PsaF subunits. The protein is Photosystem I reaction center subunit IX of Chlorella vulgaris (Green alga).